The following is a 264-amino-acid chain: 5'-nucleotidase SurE (264 aa).

Positions 9, 10, 40, and 95 each coordinate a divalent metal cation.

The protein belongs to the SurE nucleotidase family. A divalent metal cation is required as a cofactor.

The protein localises to the cytoplasm. It carries out the reaction a ribonucleoside 5'-phosphate + H2O = a ribonucleoside + phosphate. Its function is as follows. Nucleotidase that shows phosphatase activity on nucleoside 5'-monophosphates. The chain is 5'-nucleotidase SurE from Helicobacter hepaticus (strain ATCC 51449 / 3B1).